The primary structure comprises 92 residues: Large ribosomal subunit protein bL27 (92 aa).

The interval 1–20 is disordered; sequence MAHKKAGGSTRNGRDSNPKY.

It belongs to the bacterial ribosomal protein bL27 family.

In Legionella pneumophila (strain Paris), this protein is Large ribosomal subunit protein bL27.